We begin with the raw amino-acid sequence, 348 residues long: Uroporphyrinogen decarboxylase (348 aa).

Substrate-binding positions include 27–31 (RQAGR), phenylalanine 46, aspartate 76, tyrosine 152, serine 207, and histidine 320.

Belongs to the uroporphyrinogen decarboxylase family. Homodimer.

The protein resides in the cytoplasm. It catalyses the reaction uroporphyrinogen III + 4 H(+) = coproporphyrinogen III + 4 CO2. The protein operates within porphyrin-containing compound metabolism; protoporphyrin-IX biosynthesis; coproporphyrinogen-III from 5-aminolevulinate: step 4/4. Functionally, catalyzes the decarboxylation of four acetate groups of uroporphyrinogen-III to yield coproporphyrinogen-III. This is Uroporphyrinogen decarboxylase from Bacillus cereus (strain B4264).